A 492-amino-acid chain; its full sequence is MPRFVDRVVIHARAGSGGNGCASVHREKFKPLGGPDGGNGGRGGSIVFVVDPQVHTLLDFHFHPHISAPSGKQGMGNNRDGAAGADLEVKVPDGTVVLDENGRLLADLVGAGTRFEAAAGGRGGLGNAALASRARKAPGFALLGEPGETRELTLELKTVADVGLIGFPSAGKSSLVSAISAAKPKIADYPFTTLVPNLGVVSAGEHTFTVADVPGLIPGASAGRGLGLDFLRHIERCAVLVHVIDCATADPGRDPISDIDALEAELAAYTPTLQGDVTLGDLTERPRAVVLNKIDVPEARELAEFVRDEIAERGWPVFLVSTVAREGLQPLIFGLWQMISEYQSAQPEIVPRRPVIRPVPVDDSGFRVEPDPRQPGAFVVSGARPERWVRQTNFDNDEAVGYLADRLARLGVEEELLRLGARPGCAVTIGDMTFDWEPQTPAGQQVVLSGRGTDARLERTERVGAAERKAARRQRRTGDDAERGTTERGENT.

Residues 2–159 enclose the Obg domain; that stretch reads PRFVDRVVIH…RELTLELKTV (158 aa). One can recognise an OBG-type G domain in the interval 160-340; the sequence is ADVGLIGFPS…LIFGLWQMIS (181 aa). GTP is bound by residues 166-173, 191-195, 212-215, 292-295, and 321-323; these read GFPSAGKS, FTTLV, DVPG, NKID, and STV. The Mg(2+) site is built by Ser-173 and Thr-193. In terms of domain architecture, OCT spans 358 to 438; sequence PVPVDDSGFR…IGDMTFDWEP (81 aa). Residues 441-492 are disordered; that stretch reads PAGQQVVLSGRGTDARLERTERVGAAERKAARRQRRTGDDAERGTTERGENT. 2 stretches are compositionally biased toward basic and acidic residues: residues 453–469 and 476–492; these read TDAR…AERK and RTGD…GENT.

It belongs to the TRAFAC class OBG-HflX-like GTPase superfamily. OBG GTPase family. As to quaternary structure, monomer. It depends on Mg(2+) as a cofactor.

Its subcellular location is the cytoplasm. In terms of biological role, an essential GTPase which binds GTP, GDP and possibly (p)ppGpp with moderate affinity, with high nucleotide exchange rates and a fairly low GTP hydrolysis rate. Plays a role in control of the cell cycle, stress response, ribosome biogenesis and in those bacteria that undergo differentiation, in morphogenesis control. The polypeptide is GTPase Obg (Mycolicibacterium paratuberculosis (strain ATCC BAA-968 / K-10) (Mycobacterium paratuberculosis)).